The sequence spans 163 residues: Protein-export protein SecB (163 aa).

It belongs to the SecB family. In terms of assembly, homotetramer, a dimer of dimers. One homotetramer interacts with 1 SecA dimer.

The protein resides in the cytoplasm. In terms of biological role, one of the proteins required for the normal export of preproteins out of the cell cytoplasm. It is a molecular chaperone that binds to a subset of precursor proteins, maintaining them in a translocation-competent state. It also specifically binds to its receptor SecA. The polypeptide is Protein-export protein SecB (Azotobacter vinelandii (strain DJ / ATCC BAA-1303)).